A 1375-amino-acid polypeptide reads, in one-letter code: DNA-directed RNA polymerase subunit beta (1375 aa).

It belongs to the RNA polymerase beta chain family. In terms of assembly, the RNAP catalytic core consists of 2 alpha, 1 beta, 1 beta' and 1 omega subunit. When a sigma factor is associated with the core the holoenzyme is formed, which can initiate transcription.

It carries out the reaction RNA(n) + a ribonucleoside 5'-triphosphate = RNA(n+1) + diphosphate. Functionally, DNA-dependent RNA polymerase catalyzes the transcription of DNA into RNA using the four ribonucleoside triphosphates as substrates. The sequence is that of DNA-directed RNA polymerase subunit beta from Oleidesulfovibrio alaskensis (strain ATCC BAA-1058 / DSM 17464 / G20) (Desulfovibrio alaskensis).